Consider the following 156-residue polypeptide: Transcription antitermination protein NusB (156 aa).

The protein belongs to the NusB family.

Involved in transcription antitermination. Required for transcription of ribosomal RNA (rRNA) genes. Binds specifically to the boxA antiterminator sequence of the ribosomal RNA (rrn) operons. The protein is Transcription antitermination protein NusB of Rickettsia massiliae (strain Mtu5).